A 171-amino-acid polypeptide reads, in one-letter code: Homeobox protein engrailed-1-B (171 aa).

Disordered stretches follow at residues 1 to 41 (EDPG…NAAP) and 60 to 86 (YSDR…KRPR). A compositionally biased stretch (low complexity) spans 15–29 (PDSDTPSDSSKGSDS). A DNA-binding region (homeobox) is located at residues 82–141 (DKRPRTAFTAEQLQRLKAEFQANRYITEQRRQTLAQELSLNESQIKIWFQNKRAKIKKAS).

It belongs to the engrailed homeobox family.

The protein resides in the nucleus. Its function is as follows. Required for proper formation of the apical ectodermal ridge and correct dorsal-ventral patterning in the limb. The protein is Homeobox protein engrailed-1-B (en1-b) of Xenopus laevis (African clawed frog).